We begin with the raw amino-acid sequence, 145 residues long: Large ribosomal subunit protein uL15 (145 aa).

Basic and acidic residues predominate over residues 1 to 18; the sequence is MKLHELKYTEGSKKDVTR. Residues 1-51 are disordered; that stretch reads MKLHELKYTEGSKKDVTRVGRGMASGKGKTSTRGHKGQNSRSGGGVRVGFE. Gly residues predominate over residues 42–51; sequence SGGGVRVGFE.

This sequence belongs to the universal ribosomal protein uL15 family. Part of the 50S ribosomal subunit.

Its function is as follows. Binds to the 23S rRNA. The protein is Large ribosomal subunit protein uL15 of Mesoplasma florum (strain ATCC 33453 / NBRC 100688 / NCTC 11704 / L1) (Acholeplasma florum).